The following is a 309-amino-acid chain: 2-dehydropantoate 2-reductase (309 aa).

NADP(+)-binding positions include 7–12 (GAGSIG), arginine 31, and lysine 74. Residues 8–10 (AGS), arginine 31, lysine 74, and cysteine 84 contribute to the CoA site. Residues asparagine 100 and alanine 124 each coordinate NADP(+). The active-site Proton donor is lysine 180. Substrate-binding positions include lysine 180, asparagine 184, asparagine 188, asparagine 198, and 247-250 (NYNS). Residue arginine 257 participates in CoA binding. Residue glutamate 262 coordinates NADP(+).

The protein belongs to the ketopantoate reductase family. As to quaternary structure, homodimer.

Its subcellular location is the cytoplasm. The catalysed reaction is (R)-pantoate + NAD(+) = 2-dehydropantoate + NADH + H(+). The enzyme catalyses (R)-pantoate + NADP(+) = 2-dehydropantoate + NADPH + H(+). The protein operates within cofactor biosynthesis; coenzyme A biosynthesis. With respect to regulation, regulated by feedback inhibition by coenzyme A (CoA). CoA acts by competing with NAD(P)H. A disulfide bond is formed between CoA and Cys-84, which indicates an irreversible inhibition upon binding of CoA. Functionally, catalyzes the NAD(P)H-dependent reduction of ketopantoate into pantoic acid. Prefers NADH rather than NADPH as the electron donor. This chain is 2-dehydropantoate 2-reductase, found in Thermococcus kodakarensis (strain ATCC BAA-918 / JCM 12380 / KOD1) (Pyrococcus kodakaraensis (strain KOD1)).